The chain runs to 144 residues: 3-hydroxyacyl-[acyl-carrier-protein] dehydratase FabZ (144 aa).

The active site involves His-51.

It belongs to the thioester dehydratase family. FabZ subfamily.

The protein localises to the cytoplasm. The enzyme catalyses a (3R)-hydroxyacyl-[ACP] = a (2E)-enoyl-[ACP] + H2O. Involved in unsaturated fatty acids biosynthesis. Catalyzes the dehydration of short chain beta-hydroxyacyl-ACPs and long chain saturated and unsaturated beta-hydroxyacyl-ACPs. In Lactococcus lactis subsp. lactis (strain IL1403) (Streptococcus lactis), this protein is 3-hydroxyacyl-[acyl-carrier-protein] dehydratase FabZ (fabZ2).